We begin with the raw amino-acid sequence, 399 residues long: O-glucosyltransferase rumi homolog (399 aa).

Residues 1 to 18 form the signal peptide; the sequence is MHFIIGIVICLSLSVIQS. Asn-19 and Asn-67 each carry an N-linked (GlcNAc...) asparagine glycan. Cystine bridges form between Cys-66/Cys-73, Cys-71/Cys-373, Cys-118/Cys-124, and Cys-277/Cys-300. Catalysis depends on Asp-149, which acts as the Proton donor/acceptor. Positions 189–194 are interaction with the consensus sequence C-X-S-X-[PA]-C in peptide substrates; it reads AIALYP. Residues 224 to 228, Arg-232, 271 to 273, and 289 to 293 contribute to the UDP-alpha-D-glucose site; these read RGSRT, VTL, and AASFR.

This sequence belongs to the glycosyltransferase 90 family.

It localises to the endoplasmic reticulum lumen. The protein resides in the secreted. It functions in the pathway protein modification; protein glycosylation. In terms of biological role, protein O-glucosyltransferase. Catalyzes the reaction that attaches glucose through an O-glycosidic linkage to a conserved serine residue found in the consensus sequence C-X-S-X-[PA]-C in epidermal growth factor-like repeats. Regulates Notch signaling by glucosylating Notch in the ER, glucosylation is required for the correct folding and cleavage of Notch. The sequence is that of O-glucosyltransferase rumi homolog from Anopheles gambiae (African malaria mosquito).